A 257-amino-acid polypeptide reads, in one-letter code: PHD finger protein Alfin1 (257 aa).

The segment at 145–200 (SKDQLTAHNNGSNSKYKSSGKSRQSESQTKGVKMSAPVKEEVDSGEEEEEDDDEQG) is disordered. A compositionally biased stretch (low complexity) spans 153-166 (NNGSNSKYKSSGKS). A compositionally biased stretch (acidic residues) spans 187–199 (DSGEEEEEDDDEQ). Residues 200–252 (GATCGACGDNYGTDEFWICCDMCEKWFHGKCVKITPAKAEHIKQYKCPGCSIK) form a PHD-type zinc finger.

This sequence belongs to the Alfin family. Interacts with H3K4me3 and to a lesser extent with H3K4me2. As to expression, predominantly expressed in the roots.

The protein resides in the nucleus. Histone-binding component that specifically recognizes H3 tails trimethylated on 'Lys-4' (H3K4me3), which mark transcription start sites of virtually all active genes. Transcriptional regulator that binds specifically to DNA sequences 5'-GNGGTG-3' or 5'-GTGGNG-3', including promoter elements of the salt-inducible PRP2 gene. Plays a role in salinity tolerance. This Medicago sativa (Alfalfa) protein is PHD finger protein Alfin1 (ALFIN-1).